A 283-amino-acid chain; its full sequence is Methyltransferase cpsF (283 aa).

This sequence belongs to the methyltransferase superfamily. LaeA methyltransferase family.

It catalyses the reaction campesine A + S-adenosyl-L-methionine = campesine B + S-adenosyl-L-homocysteine + H(+). It functions in the pathway alkaloid biosynthesis. In terms of biological role, methyltransferase; part of the gene cluster that mediates the biosynthesis of campesine G, a dimeric indole piperazine alkaloid that shows good insecticidal activity Galleria mellonella. Within the pathway, cpsF methylates campesine A at N13 of piperazine ring to produce campesine B. The non-canonical non-ribosomal peptide synthetase cpsA catalyzes the first steps of the pathway by producing L-tryptophanal and L-valinal from their respective amino-acids. These products condensate spontaneously to form trypyl-valyl pyrazine also known as didehydrocampesine A. The NmrA-like family domain-containing oxidoreductase cpsB is the next enzyme in cps pathway and reduces the unstable didehydrocampesine A to campesine A. The methyltransferase cpsF and the acetyltransferase cpsE both recognize N13 of piperazine ring to carry out methylation and acetylation of campesine A to produce campesine C and B, respectively. The cytochrome P450 monooxygenase cpsD then acts as a dimerase that catalyzes oxidative heterocoupling between campesine B and C to produce heterodimers with unexpected 6/5/6/6/6/6/5/6 eight-ring scaffold called campesine D. Finally,the cytochrome P450 monooxygenase cpsC is a regioselective dehydrogenase that catalyzes dehydrogenation reaction towards C2-N1 to produce campesine G. This Aspergillus campestris (strain IBT 28561) protein is Methyltransferase cpsF.